A 521-amino-acid polypeptide reads, in one-letter code: Cytochrome P450 1A1 (521 aa).

A substrate-binding site is contributed by Phe229. Cys463 serves as a coordination point for heme.

This sequence belongs to the cytochrome P450 family. It depends on heme as a cofactor.

It is found in the endoplasmic reticulum membrane. The protein localises to the microsome membrane. It catalyses the reaction an organic molecule + reduced [NADPH--hemoprotein reductase] + O2 = an alcohol + oxidized [NADPH--hemoprotein reductase] + H2O + H(+). Its function is as follows. Cytochromes P450 are a group of heme-thiolate monooxygenases. They oxidize a variety of structurally unrelated compounds, including steroids, fatty acids, and xenobiotics. The sequence is that of Cytochrome P450 1A1 (cyp1a1) from Chaetodon capistratus (Four-eye butterflyfish).